The primary structure comprises 479 residues: MDGDIAAGKMASPVCAMAPLDSMEVLDLLFDRQDGILRNVELAEGWILAREEQKVLLNSDSDEFLNCILGPGDSDPSSPLWSPADSDSGISEDLPSDPQDTPPRSGTEPANTVARCHTREQGKGPCPSYLPSTPCPEPPRTQVQESSVAIDLDMWSTDTLYPEEPAGSPSRFNLTVKELLLSGGSGDLQQHSLAASQLLGPGSGHCQELVLTEDEKKLLAKEGVTLPTQLPLTKYEERVLKKIRRKIRNKQSAQESRKKKKEYIDGLENRMSACTAQNQELQRKVLHLEKQNLSLLEQLKHLQALVVQSTSKPAHAGTCIAVLLLSFALIILPSISPFNSNKVDSPGDFVPVRVFSRTLHNHAASRVAPDVTPGSEVPGPWPDVGTPHKGPSSGGLSADWGNFLEIPMLDNLTEELDNSTLVLANSTEDLGRATLLDWVASEPLLSPGRVGLEIPGEMWLSWVPRWLRVRLVQDALGVL.

At 1-317 (MDGDIAAGKM…QSTSKPAHAG (317 aa)) the chain is on the cytoplasmic side. Residues 67–144 (CILGPGDSDP…CPEPPRTQVQ (78 aa)) form a disordered region. Residues 98–110 (PQDTPPRSGTEPA) show a composition bias toward polar residues. In terms of domain architecture, bZIP spans 239 to 302 (VLKKIRRKIR…LSLLEQLKHL (64 aa)). A basic motif region spans residues 241–270 (KKIRRKIRNKQSAQESRKKKKEYIDGLENR). The segment at 281-302 (LQRKVLHLEKQNLSLLEQLKHL) is leucine-zipper. Residue lysine 290 forms a Glycyl lysine isopeptide (Lys-Gly) (interchain with G-Cter in ubiquitin) linkage. Residues 318 to 338 (TCIAVLLLSFALIILPSISPF) form a helical; Signal-anchor for type II membrane protein membrane-spanning segment. Residues 339–479 (NSNKVDSPGD…RLVQDALGVL (141 aa)) lie on the Lumenal side of the membrane. N-linked (GlcNAc...) asparagine glycosylation is found at asparagine 411, asparagine 418, and asparagine 425.

It belongs to the bZIP family. ATF subfamily. Binds DNA as a dimer. May form homodimers. Interacts with ATF6. Interacts with SYNV1/HRD1; this interaction leads to CREB3L3 ubiquitination and proteasomal degradation. Post-translationally, following ER stress a fragment containing the cytoplasmic transcription factor domain is released by proteolysis. The cleavage seems to be performed sequentially by site-1 and site-2 proteases. In terms of processing, N-glycosylation is required for optimal proteolytic activation. Ubiquitinated at Lys-290 by SYNV1/HRD1 via 'Lys-27'-linked ubiquitin. As to expression, expressed in adult liver (at protein level) and small intestine.

Its subcellular location is the endoplasmic reticulum membrane. The protein resides in the nucleus. In terms of biological role, transcription factor that may act during endoplasmic reticulum (ER) stress by activating unfolded protein response target genes. Activated in response to cAMP stimulation. Binds to the cAMP response element (CRE). Activates transcription through box-B element. Activates transcription through CRE. May function synergistically with ATF6. In acute inflammatory response, may activate expression of acute phase response (APR) genes. May be involved in growth suppression. Regulates FGF21 transcription. Plays a crucial role in the regulation of triglyceride metabolism and is required for the maintenance of normal plasma triglyceride concentrations. This Mus musculus (Mouse) protein is Cyclic AMP-responsive element-binding protein 3-like protein 3 (Creb3l3).